Here is a 239-residue protein sequence, read N- to C-terminus: tRNA1(Val) (adenine(37)-N6)-methyltransferase (239 aa).

The protein belongs to the methyltransferase superfamily. tRNA (adenine-N(6)-)-methyltransferase family.

Its subcellular location is the cytoplasm. The enzyme catalyses adenosine(37) in tRNA1(Val) + S-adenosyl-L-methionine = N(6)-methyladenosine(37) in tRNA1(Val) + S-adenosyl-L-homocysteine + H(+). Its function is as follows. Specifically methylates the adenine in position 37 of tRNA(1)(Val) (anticodon cmo5UAC). The chain is tRNA1(Val) (adenine(37)-N6)-methyltransferase from Trichodesmium erythraeum (strain IMS101).